Reading from the N-terminus, the 880-residue chain is Pentatricopeptide repeat-containing protein At3g07290, mitochondrial (880 aa).

The transit peptide at 1–89 (MLLIHIRSTR…RSDNDICVRF (89 aa)) directs the protein to the mitochondrion. PPR repeat units follow at residues 159 to 193 (NYPCYSSLLMSLAKLDLGFLAYVTYRRMEADGFVV), 194 to 228 (GMIDYRTIVNALCKNGYTEAAEMFMSKILKIGFVL), 229 to 259 (DSHIGTSLLLGFCRGLNLRDALKVFDVMSKE), 265 to 299 (NSVSYSILIHGLCEVGRLEEAFGLKDQMGEKGCQP), 300 to 334 (STRTYTVLIKALCDRGLIDKAFNLFDEMIPRGCKP), 335 to 369 (NVHTYTVLIDGLCRDGKIEEANGVCRKMVKDRIFP), 370 to 404 (SVITYNALINGYCKDGRVVPAFELLTVMEKRACKP), 405 to 439 (NVRTFNELMEGLCRVGKPYKAVHLLKRMLDNGLSP), 440 to 474 (DIVSYNVLIDGLCREGHMNTAYKLLSSMNCFDIEP), 475 to 509 (DCLTFTAIINAFCKQGKADVASAFLGLMLRKGISL), 510 to 544 (DEVTGTTLIDGVCKVGKTRDALFILETLVKMRILT), 545 to 579 (TPHSLNVILDMLSKGCKVKEELAMLGKINKLGLVP), 580 to 614 (SVVTYTTLVDGLIRSGDITGSFRILELMKLSGCLP), 615 to 649 (NVYPYTIIINGLCQFGRVEEAEKLLSAMQDSGVSP), 650 to 684 (NHVTYTVMVKGYVNNGKLDRALETVRAMVERGYEL), 685 to 721 (NDRIYSSLLQGFVLSQKGIDNSEESTVSDIALRETDP), 738 to 768 (ISGLCIFLVTRLCKEGRTDESNDLVQNVLER), 772 to 806 (LEKAMDIIMESYCSKKKHTKCMELITLVLKSGFVP), and 807 to 842 (SFKSFCLVIQGLKKEGDAERARELVMELLTSNGVVE).

It belongs to the PPR family. P subfamily.

It is found in the mitochondrion. The polypeptide is Pentatricopeptide repeat-containing protein At3g07290, mitochondrial (Arabidopsis thaliana (Mouse-ear cress)).